The sequence spans 1147 residues: Nucleolar protein 6 (1147 aa).

The tract at residues 1–49 (MQKKRSRAGAAEQEAASDDGEMSDSSDKMEVSQNKGKSGIKRAPEADDV) is disordered. Residues 15–24 (AASDDGEMSD) are compositionally biased toward acidic residues.

Belongs to the NRAP family. Part of the small subunit (SSU) processome, composed of more than 70 proteins and the RNA chaperone small nucleolar RNA (snoRNA) U3.

It localises to the nucleus. The protein localises to the nucleolus. Its subcellular location is the chromosome. Part of the small subunit (SSU) processome, first precursor of the small eukaryotic ribosomal subunit. During the assembly of the SSU processome in the nucleolus, many ribosome biogenesis factors, an RNA chaperone and ribosomal proteins associate with the nascent pre-rRNA and work in concert to generate RNA folding, modifications, rearrangements and cleavage as well as targeted degradation of pre-ribosomal RNA by the RNA exosome. The polypeptide is Nucleolar protein 6 (nol6) (Xenopus laevis (African clawed frog)).